The primary structure comprises 228 residues: Cytidylate kinase (228 aa).

Position 12–20 (Gly-12–Thr-20) interacts with ATP.

It belongs to the cytidylate kinase family. Type 1 subfamily.

The protein resides in the cytoplasm. It carries out the reaction CMP + ATP = CDP + ADP. The enzyme catalyses dCMP + ATP = dCDP + ADP. The chain is Cytidylate kinase from Lactiplantibacillus plantarum (strain ATCC BAA-793 / NCIMB 8826 / WCFS1) (Lactobacillus plantarum).